The sequence spans 379 residues: Actin, cytoplasmic (379 aa).

The protein belongs to the actin family.

The protein localises to the cytoplasm. It is found in the cytoskeleton. The enzyme catalyses ATP + H2O = ADP + phosphate + H(+). In terms of biological role, actins are highly conserved proteins that are involved in various types of cell motility and are ubiquitously expressed in all eukaryotic cells. The polypeptide is Actin, cytoplasmic (Euplotes crassus).